The following is a 324-amino-acid chain: Cyclic GMP-AMP synthase CdnE03 (324 aa).

Positions 87 and 89 each coordinate Mg(2+). ATP is bound by residues aspartate 89, 144–145 (NK), and aspartate 159. Position 159 (aspartate 159) interacts with Mg(2+). The GTP site is built by lysine 224 and serine 243.

The protein belongs to the CD-NTase family. E03 subfamily. It depends on Mg(2+) as a cofactor.

It catalyses the reaction GTP + ATP = 3',2'-cGAMP + 2 diphosphate. Activated by a virus-derived, approximately 400 nucleotide RNA (called CBASS-activating bacteriophage RNA, cabRNA) that begins in the viral terminase subunit terS and extends into terL. RNA secondary and/or tertiary structure, as well as viral infection itself, are important for CdnE activation. A much longer RNA (escaper RNA) with a different secondary structure, derived from a terS-mutated virus still binds to this protein, but does not activate its nucleotide cyclase activity. Shorter viral-derived RNAs (34 and 49 nt) with extensive predicted secondary structure also activate the enzyme, although not as well as full-length cabRNA. Its function is as follows. Cyclic nucleotide synthase (second messenger synthase) of a CBASS antivirus system. CBASS (cyclic oligonucleotide-based antiphage signaling system) provides immunity against bacteriophage. The CD-NTase protein synthesizes cyclic nucleotides in response to infection; these serve as specific second messenger signals. The signals activate a diverse range of effectors, leading to bacterial cell death and thus abortive phage infection. The effector for this system is downstream Cap15. A type I-B CBASS system. Cyclic dinucleotide synthase that catalyzes the synthesis of 3',2'-cyclic GMP-AMP (cGAMP) from GTP and ATP upon activation by viral-derived cabRNA. Binds cabRNA via positive charges in its N-terminus. In terms of biological role, protects S.aureus against phage infection. When the CBASS operon (cdnE-cap15) is introduced in S.aureus strain RN4220 there is strong protection against lytic DNA phages 80alpha-vir and phi-NM1-gamma-6 but little to no protection against phages phi-NM4-gamma-4 or phi-12-gamma-3. This Staphylococcus schleiferi protein is Cyclic GMP-AMP synthase CdnE03.